Here is a 566-residue protein sequence, read N- to C-terminus: Chaperonin GroEL 1 (566 aa).

Residues 29–32 (TIGP), 86–90 (DGTTT), glycine 413, and aspartate 492 each bind ATP. The disordered stretch occupies residues 520 to 540 (DKPEPPAPAGDGGGDPMGGMG). Over residues 529–540 (GDGGGDPMGGMG) the composition is skewed to gly residues.

Belongs to the chaperonin (HSP60) family. Forms a cylinder of 14 subunits composed of two heptameric rings stacked back-to-back. Interacts with the co-chaperonin GroES.

The protein localises to the cytoplasm. It carries out the reaction ATP + H2O + a folded polypeptide = ADP + phosphate + an unfolded polypeptide.. Together with its co-chaperonin GroES, plays an essential role in assisting protein folding. The GroEL-GroES system forms a nano-cage that allows encapsulation of the non-native substrate proteins and provides a physical environment optimized to promote and accelerate protein folding. The chain is Chaperonin GroEL 1 from Prochlorococcus marinus (strain MIT 9313).